A 198-amino-acid chain; its full sequence is Small ribosomal subunit protein uS4z (198 aa).

Phosphoserine is present on serine 68. The S4 RNA-binding domain occupies 109–180; that stretch reads RRLQTIVFKS…PGRVKRRNEK (72 aa). A disordered region spans residues 163–198; the sequence is TSPFGGGRPGRVKRRNEKSASKKASGGGDADGDDEE.

Belongs to the universal ribosomal protein uS4 family. Binds to the translation initiation factors TIF3E1.

This Arabidopsis thaliana (Mouse-ear cress) protein is Small ribosomal subunit protein uS4z (RPS9B).